The primary structure comprises 122 residues: Large ribosomal subunit protein uL14c (122 aa).

The protein belongs to the universal ribosomal protein uL14 family. In terms of assembly, part of the 50S ribosomal subunit.

The protein localises to the plastid. Its subcellular location is the chloroplast. In terms of biological role, binds to 23S rRNA. The chain is Large ribosomal subunit protein uL14c from Morus indica (Mulberry).